A 465-amino-acid chain; its full sequence is UDP-N-acetylmuramate--L-alanine ligase (465 aa).

114–120 provides a ligand contact to ATP; the sequence is GTHGKTT.

Belongs to the MurCDEF family.

The protein resides in the cytoplasm. The enzyme catalyses UDP-N-acetyl-alpha-D-muramate + L-alanine + ATP = UDP-N-acetyl-alpha-D-muramoyl-L-alanine + ADP + phosphate + H(+). It functions in the pathway cell wall biogenesis; peptidoglycan biosynthesis. In terms of biological role, cell wall formation. The polypeptide is UDP-N-acetylmuramate--L-alanine ligase (Chlorobium phaeobacteroides (strain BS1)).